Reading from the N-terminus, the 186-residue chain is Tumor necrosis factor alpha-induced protein 8-like protein 1 (186 aa).

It belongs to the TNFAIP8 family. Interacts with FBXW5; TNFAIP8L1 competes with TSC2 to bind FBXW5 increasing TSC2 stability by preventing its ubiquitination. In terms of tissue distribution, high expression detected in most carcinoma cell lines, especially in cells transformed with virus genomes.

It localises to the cytoplasm. Functionally, acts as a negative regulator of mTOR activity. The protein is Tumor necrosis factor alpha-induced protein 8-like protein 1 (TNFAIP8L1) of Homo sapiens (Human).